The chain runs to 95 residues: MLHTLHRSPWLTDFAALLRLLSEGDELLLLQDGVTAAVDGNRYLESLRNAPIKVYALNEDLIARGLTGQISNDIIPIDYTDFVRLTVKHTSQLAW.

Belongs to the DsrH/TusB family. As to quaternary structure, heterohexamer, formed by a dimer of trimers. The hexameric TusBCD complex contains 2 copies each of TusB, TusC and TusD. The TusBCD complex interacts with TusE.

The protein localises to the cytoplasm. Its function is as follows. Part of a sulfur-relay system required for 2-thiolation of 5-methylaminomethyl-2-thiouridine (mnm(5)s(2)U) at tRNA wobble positions. In Escherichia fergusonii (strain ATCC 35469 / DSM 13698 / CCUG 18766 / IAM 14443 / JCM 21226 / LMG 7866 / NBRC 102419 / NCTC 12128 / CDC 0568-73), this protein is Protein TusB.